A 427-amino-acid polypeptide reads, in one-letter code: Adenylosuccinate synthetase (427 aa).

GTP is bound by residues 12–18 (GDEGKGK) and 40–42 (GHT). Asp13 functions as the Proton acceptor in the catalytic mechanism. Residues Asp13 and Gly40 each contribute to the Mg(2+) site. IMP is bound by residues 13–16 (DEGK), 38–41 (NAGH), Thr128, Arg142, Gln223, Thr238, and Arg302. His41 acts as the Proton donor in catalysis. 298-304 (TTTGRPR) is a substrate binding site. Residues Arg304, 330-332 (LLD), and 412-414 (SVG) each bind GTP.

The protein belongs to the adenylosuccinate synthetase family. As to quaternary structure, homodimer. The cofactor is Mg(2+).

The protein resides in the cytoplasm. The catalysed reaction is IMP + L-aspartate + GTP = N(6)-(1,2-dicarboxyethyl)-AMP + GDP + phosphate + 2 H(+). It participates in purine metabolism; AMP biosynthesis via de novo pathway; AMP from IMP: step 1/2. In terms of biological role, plays an important role in the de novo pathway of purine nucleotide biosynthesis. Catalyzes the first committed step in the biosynthesis of AMP from IMP. The sequence is that of Adenylosuccinate synthetase from Alkaliphilus metalliredigens (strain QYMF).